The chain runs to 435 residues: Serine--tRNA ligase (435 aa).

Thr241–Glu243 lines the L-serine pocket. Arg272–Glu274 lines the ATP pocket. Residue Glu295 participates in L-serine binding. Glu359 to Ser362 is a binding site for ATP. Ser395 is an L-serine binding site.

Belongs to the class-II aminoacyl-tRNA synthetase family. Type-1 seryl-tRNA synthetase subfamily. Homodimer. The tRNA molecule binds across the dimer.

It localises to the cytoplasm. It carries out the reaction tRNA(Ser) + L-serine + ATP = L-seryl-tRNA(Ser) + AMP + diphosphate + H(+). It catalyses the reaction tRNA(Sec) + L-serine + ATP = L-seryl-tRNA(Sec) + AMP + diphosphate + H(+). It functions in the pathway aminoacyl-tRNA biosynthesis; selenocysteinyl-tRNA(Sec) biosynthesis; L-seryl-tRNA(Sec) from L-serine and tRNA(Sec): step 1/1. Catalyzes the attachment of serine to tRNA(Ser). Is also able to aminoacylate tRNA(Sec) with serine, to form the misacylated tRNA L-seryl-tRNA(Sec), which will be further converted into selenocysteinyl-tRNA(Sec). The polypeptide is Serine--tRNA ligase (Actinobacillus pleuropneumoniae serotype 5b (strain L20)).